The sequence spans 154 residues: Nuclear cap-binding protein subunit 2 (154 aa).

MRNA is bound by residues Tyr10, Tyr33, 102–106 (RVDWD), 113–117 (RQYGR), and 123–124 (QV). The 79-residue stretch at 30-108 (CTLYVGNLSF…RLIRVDWDAG (79 aa)) folds into the RRM domain.

It belongs to the RRM NCBP2 family. As to quaternary structure, component of the nuclear cap-binding complex (CBC), a heterodimer composed of Cbp80 and Cbp20 that interacts with m7GpppG-capped RNA. Interacts with Ars2.

The protein localises to the nucleus. Component of the cap-binding complex (CBC), which binds co-transcriptionally to the 5' cap of pre-mRNAs and is involved in various processes such as pre-mRNA splicing and RNA-mediated gene silencing (RNAi). The CBC complex is involved in miRNA-mediated RNA interference via its interaction with Ars2 and is required for primary microRNAs (miRNAs) processing. Also involved in innate immunity via the short interfering RNAs (siRNAs) processing machinery by restricting the viral RNA production. In the CBC complex, Cbp20 recognizes and binds capped RNAs (m7GpppG-capped RNA) but requires Cbp80 to stabilize the movement of its N-terminal loop and lock the CBC into a high affinity cap-binding state with the cap structure. This is Nuclear cap-binding protein subunit 2 (Cbp20) from Drosophila erecta (Fruit fly).